The following is a 305-amino-acid chain: tRNA dimethylallyltransferase 1 (305 aa).

Residue 10-17 coordinates ATP; the sequence is GPTASGKS. Residue 12–17 participates in substrate binding; it reads TASGKS. Residues 35-38 are interaction with substrate tRNA; that stretch reads DSLT.

The protein belongs to the IPP transferase family. As to quaternary structure, monomer. Mg(2+) is required as a cofactor.

It carries out the reaction adenosine(37) in tRNA + dimethylallyl diphosphate = N(6)-dimethylallyladenosine(37) in tRNA + diphosphate. Functionally, catalyzes the transfer of a dimethylallyl group onto the adenine at position 37 in tRNAs that read codons beginning with uridine, leading to the formation of N6-(dimethylallyl)adenosine (i(6)A). The chain is tRNA dimethylallyltransferase 1 from Trichlorobacter lovleyi (strain ATCC BAA-1151 / DSM 17278 / SZ) (Geobacter lovleyi).